The chain runs to 290 residues: Glycine--tRNA ligase alpha subunit (290 aa).

This sequence belongs to the class-II aminoacyl-tRNA synthetase family. Tetramer of two alpha and two beta subunits.

It is found in the cytoplasm. The enzyme catalyses tRNA(Gly) + glycine + ATP = glycyl-tRNA(Gly) + AMP + diphosphate. This chain is Glycine--tRNA ligase alpha subunit, found in Maridesulfovibrio salexigens (strain ATCC 14822 / DSM 2638 / NCIMB 8403 / VKM B-1763) (Desulfovibrio salexigens).